A 156-amino-acid polypeptide reads, in one-letter code: Small ribosomal subunit protein uS7 (156 aa).

This sequence belongs to the universal ribosomal protein uS7 family. As to quaternary structure, part of the 30S ribosomal subunit. Contacts proteins S9 and S11.

One of the primary rRNA binding proteins, it binds directly to 16S rRNA where it nucleates assembly of the head domain of the 30S subunit. Is located at the subunit interface close to the decoding center, probably blocks exit of the E-site tRNA. In Kocuria rhizophila (strain ATCC 9341 / DSM 348 / NBRC 103217 / DC2201), this protein is Small ribosomal subunit protein uS7.